Here is a 331-residue protein sequence, read N- to C-terminus: Adenosine deaminase (331 aa).

Residues His12 and His14 each contribute to the Zn(2+) site. The substrate site is built by His14, Asp16, and Gly170. His197 is a Zn(2+) binding site. Glu200 acts as the Proton donor in catalysis. A Zn(2+)-binding site is contributed by Asp278.

The protein belongs to the metallo-dependent hydrolases superfamily. Adenosine and AMP deaminases family. Adenosine deaminase subfamily. Requires Zn(2+) as cofactor.

The enzyme catalyses adenosine + H2O + H(+) = inosine + NH4(+). It catalyses the reaction 2'-deoxyadenosine + H2O + H(+) = 2'-deoxyinosine + NH4(+). Functionally, catalyzes the hydrolytic deamination of adenosine and 2-deoxyadenosine. The protein is Adenosine deaminase of Vibrio vulnificus (strain CMCP6).